The sequence spans 284 residues: D-tagatose-1,6-bisphosphate aldolase subunit GatY (284 aa).

Residue Asp-82 is the Proton donor of the active site. Residues His-83 and His-180 each contribute to the Zn(2+) site. Gly-181 contacts dihydroxyacetone phosphate. His-208 is a Zn(2+) binding site. Residues 209 to 211 and 230 to 233 contribute to the dihydroxyacetone phosphate site; these read GAS and NVAT.

Belongs to the class II fructose-bisphosphate aldolase family. TagBP aldolase GatY subfamily. In terms of assembly, forms a complex with GatZ. Zn(2+) is required as a cofactor.

The catalysed reaction is D-tagatofuranose 1,6-bisphosphate = D-glyceraldehyde 3-phosphate + dihydroxyacetone phosphate. It participates in carbohydrate metabolism; D-tagatose 6-phosphate degradation; D-glyceraldehyde 3-phosphate and glycerone phosphate from D-tagatose 6-phosphate: step 2/2. Its function is as follows. Catalytic subunit of the tagatose-1,6-bisphosphate aldolase GatYZ, which catalyzes the reversible aldol condensation of dihydroxyacetone phosphate (DHAP or glycerone-phosphate) with glyceraldehyde 3-phosphate (G3P) to produce tagatose 1,6-bisphosphate (TBP). Requires GatZ subunit for full activity and stability. Is involved in the catabolism of galactitol. The sequence is that of D-tagatose-1,6-bisphosphate aldolase subunit GatY from Salmonella paratyphi B (strain ATCC BAA-1250 / SPB7).